The primary structure comprises 264 residues: MTGHHCWGYGQDDGPSNWHKLYPIAQGDRQSPINIISSQAVYSPSLQPLELFYEACMSLSITNNGHSVQVDFNDSDDRTVVSGGPLEGPYRLKQLHFHWGKKRDMGSEHTVDGKSFPSELHLVHWNAKKYSTFGEAAAAPDGLAVVGVFLETGDEHPSMNRLTDALYMVRFKDTKAQFSCFNPKCLLPTSRHYWTYPGSLTTPPLSESVTWIVLREPIRISERQMEKFRSLLFTSEDDERIHMVDNFRPPQPLKGRVVKASFQA.

One can recognise an Alpha-carbonic anhydrase domain in the interval 5–262 (HCWGYGQDDG…LKGRVVKASF (258 aa)). Residue H66 is the Proton donor/acceptor of the active site. H96, H98, and H121 together coordinate Zn(2+). Substrate is bound at residue 201–202 (TT).

It belongs to the alpha-carbonic anhydrase family. Requires Zn(2+) as cofactor.

The protein resides in the cytoplasm. It catalyses the reaction hydrogencarbonate + H(+) = CO2 + H2O. Its function is as follows. Reversible hydration of carbon dioxide. The sequence is that of Carbonic anhydrase 7 (Ca7) from Mus musculus (Mouse).